Reading from the N-terminus, the 353-residue chain is tRNA-specific 2-thiouridylase MnmA 1 (353 aa).

ATP is bound by residues Ala9–Ser16 and Met35. Cys98 functions as the Nucleophile in the catalytic mechanism. A disulfide bridge connects residues Cys98 and Cys194. Gly122 lines the ATP pocket. Residues Lys144–Gln146 are interaction with tRNA. Residue Cys194 is the Cysteine persulfide intermediate of the active site. The segment at Arg300–Tyr301 is interaction with tRNA.

This sequence belongs to the MnmA/TRMU family.

It localises to the cytoplasm. The catalysed reaction is S-sulfanyl-L-cysteinyl-[protein] + uridine(34) in tRNA + AH2 + ATP = 2-thiouridine(34) in tRNA + L-cysteinyl-[protein] + A + AMP + diphosphate + H(+). In terms of biological role, catalyzes the 2-thiolation of uridine at the wobble position (U34) of tRNA, leading to the formation of s(2)U34. This Clostridium botulinum (strain Okra / Type B1) protein is tRNA-specific 2-thiouridylase MnmA 1.